Consider the following 271-residue polypeptide: Ribosomal RNA small subunit methyltransferase A (271 aa).

S-adenosyl-L-methionine contacts are provided by histidine 11, leucine 13, glycine 38, glutamate 58, aspartate 86, and asparagine 101.

The protein belongs to the class I-like SAM-binding methyltransferase superfamily. rRNA adenine N(6)-methyltransferase family. RsmA subfamily.

It localises to the cytoplasm. It carries out the reaction adenosine(1518)/adenosine(1519) in 16S rRNA + 4 S-adenosyl-L-methionine = N(6)-dimethyladenosine(1518)/N(6)-dimethyladenosine(1519) in 16S rRNA + 4 S-adenosyl-L-homocysteine + 4 H(+). In terms of biological role, specifically dimethylates two adjacent adenosines (A1518 and A1519) in the loop of a conserved hairpin near the 3'-end of 16S rRNA in the 30S particle. May play a critical role in biogenesis of 30S subunits. In Helicobacter pylori (strain ATCC 700392 / 26695) (Campylobacter pylori), this protein is Ribosomal RNA small subunit methyltransferase A.